Consider the following 135-residue polypeptide: Ribosome-binding factor A (135 aa).

The protein belongs to the RbfA family. As to quaternary structure, monomer. Binds 30S ribosomal subunits, but not 50S ribosomal subunits or 70S ribosomes.

The protein resides in the cytoplasm. Functionally, one of several proteins that assist in the late maturation steps of the functional core of the 30S ribosomal subunit. Associates with free 30S ribosomal subunits (but not with 30S subunits that are part of 70S ribosomes or polysomes). Required for efficient processing of 16S rRNA. May interact with the 5'-terminal helix region of 16S rRNA. This is Ribosome-binding factor A from Sinorhizobium fredii (strain NBRC 101917 / NGR234).